The primary structure comprises 181 residues: Crossover junction endodeoxyribonuclease RuvC (181 aa).

Residues Asp7, Glu67, and Asp139 contribute to the active site. Mg(2+)-binding residues include Asp7, Glu67, and Asp139.

It belongs to the RuvC family. In terms of assembly, homodimer which binds Holliday junction (HJ) DNA. The HJ becomes 2-fold symmetrical on binding to RuvC with unstacked arms; it has a different conformation from HJ DNA in complex with RuvA. In the full resolvosome a probable DNA-RuvA(4)-RuvB(12)-RuvC(2) complex forms which resolves the HJ. It depends on Mg(2+) as a cofactor.

Its subcellular location is the cytoplasm. The catalysed reaction is Endonucleolytic cleavage at a junction such as a reciprocal single-stranded crossover between two homologous DNA duplexes (Holliday junction).. Functionally, the RuvA-RuvB-RuvC complex processes Holliday junction (HJ) DNA during genetic recombination and DNA repair. Endonuclease that resolves HJ intermediates. Cleaves cruciform DNA by making single-stranded nicks across the HJ at symmetrical positions within the homologous arms, yielding a 5'-phosphate and a 3'-hydroxyl group; requires a central core of homology in the junction. The consensus cleavage sequence is 5'-(A/T)TT(C/G)-3'. Cleavage occurs on the 3'-side of the TT dinucleotide at the point of strand exchange. HJ branch migration catalyzed by RuvA-RuvB allows RuvC to scan DNA until it finds its consensus sequence, where it cleaves and resolves the cruciform DNA. In Ralstonia nicotianae (strain ATCC BAA-1114 / GMI1000) (Ralstonia solanacearum), this protein is Crossover junction endodeoxyribonuclease RuvC.